Consider the following 155-residue polypeptide: Gene 5 protein (155 aa).

The disordered stretch occupies residues M1–T26. Over residues G8–T19 the composition is skewed to basic and acidic residues.

The chain is Gene 5 protein (5) from Mycobacterium phage L5 (Mycobacteriophage L5).